Here is a 397-residue protein sequence, read N- to C-terminus: Protein Mx1 (397 aa).

Belongs to the TRAFAC class dynamin-like GTPase superfamily. Dynamin/Fzo/YdjA family.

The sequence is that of Protein Mx1 (Mx1) from Mus musculus (Mouse).